The chain runs to 192 residues: Vascular endothelial growth factor A (192 aa).

The first 26 residues, 1 to 26, serve as a signal peptide directing secretion; sequence MNFLLTWIHWGLAALLYFHNAKVLQA. 3 disulfide bridges follow: Cys52-Cys94, Cys83-Cys128, and Cys87-Cys130. An N-linked (GlcNAc...) asparagine glycan is attached at Asn101.

It belongs to the PDGF/VEGF growth factor family. As to quaternary structure, homodimer; disulfide-linked. Also found as heterodimer with PGF. Interacts with FLT1/VEGFR1 and KDR/VEGFR2 receptors, heparan sulfate and heparin. Expressed by the venom gland, and probably other tissues.

It localises to the secreted. Functionally, growth factor active in angiogenesis, vasculogenesis and endothelial cell growth. Induces endothelial cell proliferation, promotes cell migration, inhibits apoptosis and induces permeabilization of blood vessels. In Agkistrodon piscivorus piscivorus (Eastern cottonmouth), this protein is Vascular endothelial growth factor A.